A 246-amino-acid chain; its full sequence is Protein-lysine N-methyltransferase EFM6 (246 aa).

Residues W51, 87–89 (GSG), D115, W143, and A169 each bind S-adenosyl-L-methionine.

This sequence belongs to the class I-like SAM-binding methyltransferase superfamily. METTL21 family. EFM6 subfamily.

It localises to the cytoplasm. S-adenosyl-L-methionine-dependent protein-lysine N-methyltransferase that methylates elongation factor 1-alpha (TEF1 and TEF2) at 'Lys-390'. This is Protein-lysine N-methyltransferase EFM6 from Saccharomyces cerevisiae (strain ATCC 204508 / S288c) (Baker's yeast).